A 222-amino-acid chain; its full sequence is MSHLVKMENGQSQTIQEMLGCIERYNPDHLKTLESYVQDQAKNNTYDLEANLAVLKLYQFNPHMLNFDITYTILLKSLTSLPHTDFVMAKCLLLPQQMKDENVQTIIDLADILERADFTLFWQRAEVNRNMFRHIAGFHDSIRKFVSHVVGTTFQTIRKDLLKELLGGIEDSTLESWIKRNGWKNQGQGLVIVAMQDDKIKTKNITEKIEFDNVGALMAQCL.

One can recognise a PCI domain in the interval 46–208 (YDLEANLAVL…KIKTKNITEK (163 aa)).

It belongs to the eIF-3 subunit K family. Component of the eukaryotic translation initiation factor 3 (eIF-3) complex. The eIF-3 complex interacts with pix.

The protein resides in the cytoplasm. Functionally, component of the eukaryotic translation initiation factor 3 (eIF-3) complex, which is involved in protein synthesis of a specialized repertoire of mRNAs and, together with other initiation factors, stimulates binding of mRNA and methionyl-tRNAi to the 40S ribosome. The eIF-3 complex specifically targets and initiates translation of a subset of mRNAs involved in cell proliferation. This is Eukaryotic translation initiation factor 3 subunit K from Drosophila sechellia (Fruit fly).